The sequence spans 68 residues: Tabimmunregulin 1 (68 aa).

The N-terminal stretch at 1–26 (MLLKSYVFFLLSLLIVGLFTSRDADA) is a signal peptide. A propeptide spanning residues 27–38 (QYEDLVTGYLRK) is cleaved from the precursor.

As to expression, expressed in salivary glands.

It is found in the secreted. In terms of biological role, horsefly salivary gland immunosuppressant protein that likely inhibits the host inflammatory response by regulation of anti- and pro-inflammatory cytokines. When tested on mouse splenocytes in the presence of LPS, it increases the secretion of the proinflammatory cytokine interleukin-10 (IL10) and decreases the secretion of the proinflammatory cytokine interferon-gamma (IFNG) in a dose-dependent manner. The protein is Tabimmunregulin 1 of Tabanus yao (Horsefly).